Consider the following 193-residue polypeptide: Ion-translocating oxidoreductase complex subunit A (193 aa).

6 helical membrane passes run Leu5 to Leu25, Ile39 to Val59, Leu67 to Phe87, Leu102 to Leu122, Ile134 to Met154, and Ser171 to Val191.

The protein belongs to the NqrDE/RnfAE family. In terms of assembly, the complex is composed of six subunits: RnfA, RnfB, RnfC, RnfD, RnfE and RnfG.

The protein localises to the cell inner membrane. Part of a membrane-bound complex that couples electron transfer with translocation of ions across the membrane. This is Ion-translocating oxidoreductase complex subunit A from Vibrio cholerae serotype O1 (strain ATCC 39315 / El Tor Inaba N16961).